A 188-amino-acid polypeptide reads, in one-letter code: MAIRNLMELKASLPRNGRLMGLDLGEKTIGLAVSDPGLSVASPVGTIRRTKFTQDAQELARAMRDRDVRALVVGLPVNMDGTEGPRCQSVREFSRLLLQRPQLFGFEPEIAFWDERLSTSAVERMMIGWDMTRKRRDEVVDKMAAAYILQGALDRLRQGDAAPGGSDDERDEDGDTDGEDGGGDGGGE.

The disordered stretch occupies residues 156–188 (LRQGDAAPGGSDDERDEDGDTDGEDGGGDGGGE). The span at 166–188 (SDDERDEDGDTDGEDGGGDGGGE) shows a compositional bias: acidic residues.

It belongs to the YqgF nuclease family.

Its subcellular location is the cytoplasm. Its function is as follows. Could be a nuclease involved in processing of the 5'-end of pre-16S rRNA. This chain is Putative pre-16S rRNA nuclease, found in Rhodospirillum centenum (strain ATCC 51521 / SW).